The primary structure comprises 736 residues: Acyl-coenzyme A oxidase (736 aa).

This sequence belongs to the acyl-CoA oxidase family. FAD is required as a cofactor.

The protein resides in the peroxisome. It carries out the reaction a 2,3-saturated acyl-CoA + O2 = a (2E)-enoyl-CoA + H2O2. Its pathway is lipid metabolism; peroxisomal fatty acid beta-oxidation. The chain is Acyl-coenzyme A oxidase (POX1) from Kluyveromyces lactis (strain ATCC 8585 / CBS 2359 / DSM 70799 / NBRC 1267 / NRRL Y-1140 / WM37) (Yeast).